A 238-amino-acid polypeptide reads, in one-letter code: Ribosomal RNA small subunit methyltransferase G (238 aa).

S-adenosyl-L-methionine-binding positions include G80, 131-132, and R148; that span reads AE.

It belongs to the methyltransferase superfamily. RNA methyltransferase RsmG family.

The protein resides in the cytoplasm. Functionally, specifically methylates the N7 position of a guanine in 16S rRNA. This chain is Ribosomal RNA small subunit methyltransferase G, found in Thermotoga maritima (strain ATCC 43589 / DSM 3109 / JCM 10099 / NBRC 100826 / MSB8).